The chain runs to 212 residues: MLSYYEHNTAFQTNNCNSGSNAATTYNSDANNDTIMNKRKNDHFEFDTHTFYQRSKRTKRDSVSTKFSVGSGCANLNNNNNNIIINNNNNNNNNNNNHNHNNSNNTATYNNIHYKKNIEICPLKPVSMHHTMNSRLLNESEFYSETEEYMIHGYFGNTNRDITGTSPTGSASIIQHQYHLLPSQSIIASQAPGTAMAALTNNNIANDYMDID.

Over residues 87 to 105 the composition is skewed to low complexity; sequence NNNNNNNNNNNHNHNNSNN. The tract at residues 87–107 is disordered; that stretch reads NNNNNNNNNNNHNHNNSNNTA.

This is an uncharacterized protein from Saccharomyces cerevisiae (strain ATCC 204508 / S288c) (Baker's yeast).